The primary structure comprises 178 residues: Oligoribonuclease (178 aa).

The region spanning 7–168 (LIWIDLEMTG…DDIRESIAEL (162 aa)) is the Exonuclease domain. The active site involves Tyr128.

It belongs to the oligoribonuclease family.

Its subcellular location is the cytoplasm. In terms of biological role, 3'-to-5' exoribonuclease specific for small oligoribonucleotides. This is Oligoribonuclease from Francisella tularensis subsp. holarctica (strain FTNF002-00 / FTA).